The sequence spans 422 residues: Cysteate synthase (422 aa).

Lys105 is subject to N6-(pyridoxal phosphate)lysine. Asn131 and Thr379 together coordinate pyridoxal 5'-phosphate.

Belongs to the threonine synthase family. Cysteate synthase subfamily. In terms of assembly, homotrimer. Pyridoxal 5'-phosphate serves as cofactor.

The catalysed reaction is O-phospho-L-serine + sulfite + H(+) = L-cysteate + phosphate. It functions in the pathway cofactor biosynthesis; coenzyme M biosynthesis. Functionally, specifically catalyzes the beta-elimination of phosphate from L-phosphoserine and the beta-addition of sulfite to the dehydroalanine intermediate to produce L-cysteate. This is Cysteate synthase from Methanospirillum hungatei JF-1 (strain ATCC 27890 / DSM 864 / NBRC 100397 / JF-1).